Consider the following 69-residue polypeptide: Metallothionein-like protein 3 (69 aa).

The protein belongs to the metallothionein superfamily. Type 15 family. Expressed in leaf mesophyll cells, root tips, and at low levels in anthers.

Functionally, metallothioneins have a high content of cysteine residues that bind various heavy metals. Functions as a metal chelator of copper (Cu) and zinc (Zn). Plays a role in Cu homeostasis, specifically in the remobilization of Cu from senescing leaves. The mobilization of Cu from internal sources is important for seed development. The polypeptide is Metallothionein-like protein 3 (Arabidopsis thaliana (Mouse-ear cress)).